A 191-amino-acid chain; its full sequence is Ankyrin repeat domain-containing protein 22 (191 aa).

ANK repeat units follow at residues 39-68 (NGDTPLICACRRGHLRIVSFLLRRNADVNL), 72-100 (KERTCLHYAVKKRFTFFDYLLIILLMPVL), 101-130 (LIGYFLMVSKTKQNETLVRMLLNAGVEVNA), and 134-163 (DGYTALHYACQMKNQTLIPLLLEAHADPMI).

This Mus musculus (Mouse) protein is Ankyrin repeat domain-containing protein 22 (Ankrd22).